A 79-amino-acid chain; its full sequence is Small serum protein 3 (79 aa).

A signal peptide spans 1 to 19 (MKVFFILIIFSFTLATCQG). 3 cysteine pairs are disulfide-bonded: Cys-21/Cys-72, Cys-39/Cys-64, and Cys-62/Cys-71.

It is found in the secreted. Functionally, shows an slight inhibitory effect toward the metalloproteinase brevilysin H6, but does not inhibit the metalloproteinases thermolysin, HR1A and HR1B. This Protobothrops flavoviridis (Habu) protein is Small serum protein 3.